The chain runs to 1111 residues: Receptor-type guanylate cyclase gcy-14 (1111 aa).

An N-terminal signal peptide occupies residues 1-14 (MCLFLLLFPYLASG). At 15–473 (QFLQTVKVGL…ECPPDFVKEY (459 aa)) the chain is on the extracellular side. Asn65, Asn130, Asn318, Asn340, Asn365, and Asn379 each carry an N-linked (GlcNAc...) asparagine glycan. A helical transmembrane segment spans residues 474 to 494 (LVYTIIAAVIVVLALLAGCAG). Residues 482-817 (VIVVLALLAG…KSNLMDHVFN (336 aa)) form the Protein kinase domain. Residues 488–496 (LLAGCAGLL) and Lys545 each bind ATP. At 495–1111 (LLYTMQMKRK…DFNNGNECVS (617 aa)) the chain is on the cytoplasmic side. The Guanylate cyclase domain maps to 875 to 1005 (TIFFSDVVQF…DAVNTASRME (131 aa)). A disordered region spans residues 1061–1082 (SAQAPREKTPEPPRRQSVRSIS). Positions 1065–1074 (PREKTPEPPR) are enriched in basic and acidic residues.

Belongs to the adenylyl cyclase class-4/guanylyl cyclase family. As to quaternary structure, homodimer. As to expression, expressed asymmetrically in ASEL sensory neuron.

The protein resides in the cell membrane. It localises to the cell projection. It is found in the cilium. It carries out the reaction GTP = 3',5'-cyclic GMP + diphosphate. Functionally, guanylate cyclase involved in the production of the second messenger cGMP. Regulates chemotaxis responses toward Na(1+) and Li(1+) salt ions and alkaline pH in ASE left (ASEL) sensory neuron. Directly senses environmental alkalinity in ASEL neuron which probably leads to the activation of cGMP-gated cation channel tax2/tax4. This is Receptor-type guanylate cyclase gcy-14 from Caenorhabditis elegans.